Consider the following 43-residue polypeptide: Cytochrome b559 subunit beta (43 aa).

The chain crosses the membrane as a helical span at residues 18 to 34 (WLSVHALGIPTIFFLGA). H22 is a heme binding site.

Belongs to the PsbE/PsbF family. Heterodimer of an alpha subunit and a beta subunit. PSII is composed of 1 copy each of membrane proteins PsbA, PsbB, PsbC, PsbD, PsbE, PsbF, PsbH, PsbI, PsbJ, PsbK, PsbL, PsbM, PsbT, PsbX, PsbY, PsbZ, Psb30/Ycf12, at least 3 peripheral proteins of the oxygen-evolving complex and a large number of cofactors. It forms dimeric complexes. The cofactor is heme b.

The protein localises to the plastid. The protein resides in the chloroplast thylakoid membrane. This b-type cytochrome is tightly associated with the reaction center of photosystem II (PSII). PSII is a light-driven water:plastoquinone oxidoreductase that uses light energy to abstract electrons from H(2)O, generating O(2) and a proton gradient subsequently used for ATP formation. It consists of a core antenna complex that captures photons, and an electron transfer chain that converts photonic excitation into a charge separation. This Stigeoclonium helveticum (Green alga) protein is Cytochrome b559 subunit beta.